A 258-amino-acid polypeptide reads, in one-letter code: L-aspartate dehydrogenase 1 (258 aa).

NAD(+) contacts are provided by Ala121 and Asn181. His211 is an active-site residue.

The protein belongs to the L-aspartate dehydrogenase family.

It catalyses the reaction L-aspartate + NADP(+) + H2O = oxaloacetate + NH4(+) + NADPH + H(+). The enzyme catalyses L-aspartate + NAD(+) + H2O = oxaloacetate + NH4(+) + NADH + H(+). It participates in cofactor biosynthesis; NAD(+) biosynthesis; iminoaspartate from L-aspartate (dehydrogenase route): step 1/1. In terms of biological role, specifically catalyzes the NAD or NADP-dependent dehydrogenation of L-aspartate to iminoaspartate. The chain is L-aspartate dehydrogenase 1 from Bordetella pertussis (strain Tohama I / ATCC BAA-589 / NCTC 13251).